Here is a 568-residue protein sequence, read N- to C-terminus: Urease subunit alpha (568 aa).

The Urease domain maps to G133–L568. The Ni(2+) site is built by H138, H140, and K217. The residue at position 217 (K217) is an N6-carboxylysine. Residue H219 participates in substrate binding. Residues H246 and H272 each contribute to the Ni(2+) site. The active-site Proton donor is the H320. Ni(2+) is bound at residue D360.

It belongs to the metallo-dependent hydrolases superfamily. Urease alpha subunit family. In terms of assembly, heterotrimer of UreA (gamma), UreB (beta) and UreC (alpha) subunits. Three heterotrimers associate to form the active enzyme. Ni cation serves as cofactor. Carboxylation allows a single lysine to coordinate two nickel ions.

It is found in the cytoplasm. It catalyses the reaction urea + 2 H2O + H(+) = hydrogencarbonate + 2 NH4(+). The protein operates within nitrogen metabolism; urea degradation; CO(2) and NH(3) from urea (urease route): step 1/1. In Haloarcula marismortui (strain ATCC 43049 / DSM 3752 / JCM 8966 / VKM B-1809) (Halobacterium marismortui), this protein is Urease subunit alpha.